The primary structure comprises 252 residues: Type III pantothenate kinase (252 aa).

Position 6 to 13 (6 to 13 (DMGNTRLK)) interacts with ATP. Substrate contacts are provided by residues Y93 and 100–103 (GVDR). Residue D102 is the Proton acceptor of the active site. T126 provides a ligand contact to ATP. Residue T179 participates in substrate binding.

This sequence belongs to the type III pantothenate kinase family. Homodimer. NH4(+) serves as cofactor. Requires K(+) as cofactor.

It localises to the cytoplasm. It catalyses the reaction (R)-pantothenate + ATP = (R)-4'-phosphopantothenate + ADP + H(+). Its pathway is cofactor biosynthesis; coenzyme A biosynthesis; CoA from (R)-pantothenate: step 1/5. In terms of biological role, catalyzes the phosphorylation of pantothenate (Pan), the first step in CoA biosynthesis. The protein is Type III pantothenate kinase of Cellvibrio japonicus (strain Ueda107) (Pseudomonas fluorescens subsp. cellulosa).